We begin with the raw amino-acid sequence, 171 residues long: Peptide methionine sulfoxide reductase MsrA (171 aa).

The active site involves Cys13.

The protein belongs to the MsrA Met sulfoxide reductase family.

It catalyses the reaction L-methionyl-[protein] + [thioredoxin]-disulfide + H2O = L-methionyl-(S)-S-oxide-[protein] + [thioredoxin]-dithiol. It carries out the reaction [thioredoxin]-disulfide + L-methionine + H2O = L-methionine (S)-S-oxide + [thioredoxin]-dithiol. In terms of biological role, has an important function as a repair enzyme for proteins that have been inactivated by oxidation. Catalyzes the reversible oxidation-reduction of methionine sulfoxide in proteins to methionine. This chain is Peptide methionine sulfoxide reductase MsrA, found in Mycobacterium sp. (strain JLS).